A 313-amino-acid chain; its full sequence is NADH-ubiquinone oxidoreductase chain 1 (313 aa).

8 helical membrane-spanning segments follow: residues 2 to 22 (ILSVIHIFLYFVPVLLAVAFL), 72 to 92 (VFFFAPMLALILALLLWMPVP), 102 to 122 (FAVLFVLAISSLSVYSIMASG), 148 to 168 (LGLIILSLICLVGGFNLAQFF), 173 to 193 (EVMLMLSCWPLGIMWFISTVA), 222 to 244 (FALFFLAEYANILFMNVLSALLF), 249 to 268 (FSLLGVAVKVGLLAGLYLWF), and 293 to 313 (LGLLMLNFSLPLTFSGIGGGL).

This sequence belongs to the complex I subunit 1 family.

Its subcellular location is the mitochondrion inner membrane. The catalysed reaction is a ubiquinone + NADH + 5 H(+)(in) = a ubiquinol + NAD(+) + 4 H(+)(out). Functionally, core subunit of the mitochondrial membrane respiratory chain NADH dehydrogenase (Complex I) that is believed to belong to the minimal assembly required for catalysis. Complex I functions in the transfer of electrons from NADH to the respiratory chain. The immediate electron acceptor for the enzyme is believed to be ubiquinone. The chain is NADH-ubiquinone oxidoreductase chain 1 (ND1) from Branchiostoma lanceolatum (Common lancelet).